A 439-amino-acid polypeptide reads, in one-letter code: Thymidine phosphorylase (439 aa).

The protein belongs to the thymidine/pyrimidine-nucleoside phosphorylase family. Homodimer.

It catalyses the reaction thymidine + phosphate = 2-deoxy-alpha-D-ribose 1-phosphate + thymine. It participates in pyrimidine metabolism; dTMP biosynthesis via salvage pathway; dTMP from thymine: step 1/2. The enzymes which catalyze the reversible phosphorolysis of pyrimidine nucleosides are involved in the degradation of these compounds and in their utilization as carbon and energy sources, or in the rescue of pyrimidine bases for nucleotide synthesis. In Mesorhizobium japonicum (strain LMG 29417 / CECT 9101 / MAFF 303099) (Mesorhizobium loti (strain MAFF 303099)), this protein is Thymidine phosphorylase.